The following is an 886-amino-acid chain: MGMTIEHYKIGERYNPRAREKKWQEIWDEKKIFQTVQGDGREKYYVLEMFPYPSGRIHMGHVRNYAMGDVVARYKRAKGFNVLHPMGWDAFGMPAENAALQSKVHPKTWTYENIAVMRGQLKQLGLSLDWAREFATCDVDYYHRQQMLFLDFYQKGLVARKVAKVNWDPVDHTVLANEQVVDGRGWRSGALVEQRELTQWFFKISDFSEDLLAGLEELDQWPEKVRTMQKNWIGKSQGLLIRWALKSTADDAGGSNDVCEAFDEVVCYSTRPDTLFGASFLALSVDHPIAQSLAKKDKALAAFIENCRCGGTTTAALETAEKQGFLTPLVAVHPFDETVHIPVYIANFVLMDYGTGAIFGCPAHDQRDFDFARKYDLPIKPVVLPRETKVEDFVLAEMPYTGDGVMINSSFLDGLTPQQAFEEVAKRLEQQVLHGQPQGKKTVQFRLRDWGISRQRYWGCPIPMIHCTSCGVVPVPRADLPVVLPDDVTFDQPGNPLARHEMWQDVACPICGQPAKRETDTMDTFVDSSWYYARFTAPFAPEPVEKQATAEWLPVQQYIGGIEHAILHLLYARFFMRAMKLVGHVSVDEPFKGLFTQGMVVHETYRDDQGWVSPAEISIVEKDGKRCAYKLTDQSEVTIGLIEKMSKSKKNVVDPDDIIASYGADTVRWFVLSDSPPERDVIWTESGVEGAHRFVQRVWRHVALSAAVLKDVAPRAGHQGAALELSKAAHRMLHAVEDDLEKFAFNRAIARLYEFLNIMAPLLNKVADVEDEMKAALRQAMDFFLAMIAPIMPHLAEECHAALGETTLMSELAWPVYDPALIVEESYTLPVQINGKKRGEVTVAATASETMIKEAVLALDFVQAQLVEKPMKKIIIVPQRIVNVVL.

A 'HIGH' region motif is present at residues 51–61 (PYPSGRIHMGH). The 'KMSKS' region signature appears at 644 to 648 (KMSKS). Residue Lys-647 participates in ATP binding.

Belongs to the class-I aminoacyl-tRNA synthetase family.

Its subcellular location is the cytoplasm. The catalysed reaction is tRNA(Leu) + L-leucine + ATP = L-leucyl-tRNA(Leu) + AMP + diphosphate. In Bartonella tribocorum (strain CIP 105476 / IBS 506), this protein is Leucine--tRNA ligase.